The chain runs to 340 residues: Deubiquitinase SseL (340 aa).

The active site involves H223. The Nucleophile role is filled by C285.

The protein belongs to the peptidase C79 family.

The protein localises to the secreted. It is found in the host cytoplasm. Functionally, effector proteins function to alter host cell physiology and promote bacterial survival in host tissues. This protease targets the host cell ubiquitin pathway by acting as a deubiquitinase in infected host cells. This chain is Deubiquitinase SseL (sseL), found in Salmonella paratyphi B (strain ATCC BAA-1250 / SPB7).